The chain runs to 46 residues: Large ribosomal subunit protein bL34 (46 aa).

Positions 1 to 17 (MTKRTLRGSVRKKKRTS) are enriched in basic residues. The interval 1–26 (MTKRTLRGSVRKKKRTSGFRARMETP) is disordered.

Belongs to the bacterial ribosomal protein bL34 family.

This Pseudanabaena sp. (strain PCC 6903) protein is Large ribosomal subunit protein bL34 (rpmH).